The primary structure comprises 205 residues: High frequency lysogenization protein HflD homolog (205 aa).

Belongs to the HflD family.

Its subcellular location is the cytoplasm. The protein resides in the cell inner membrane. The protein is High frequency lysogenization protein HflD homolog of Haemophilus influenzae (strain PittEE).